The following is a 242-amino-acid chain: MFARSFSNASRTIARRSLSTRSGPAPSSLWSSRNAVIAGTTLAITALAVTSERRKVFNESAQKATSPRDSIIAQDSLKENVHKKSVRQDEFSGESTKPEASTSSDSVEKAADDAAQILEEKEAEASEPSQGAYNPETGEINWDCPCLGGMATGPCGEQFKAAFSCFVYSEAEPKGVDCVELFKVMQDCFREHPEIYGEVDTLGLVLMFYAEIDDDEAPPQEGTMEEKVEAAKEETAAPAAAP.

The transit peptide at 1–18 (MFARSFSNASRTIARRSL) directs the protein to the mitochondrion. Positions 1-22 (MFARSFSNASRTIARRSLSTRS) are enriched in polar residues. The segment at 1–30 (MFARSFSNASRTIARRSLSTRSGPAPSSLW) is disordered. Over 19–34 (STRSGPAPSSLWSSRN) the chain is Mitochondrial matrix. Residues 35–51 (AVIAGTTLAITALAVTS) traverse the membrane as a helical; Signal-anchor for type II membrane protein segment. Residues 52 to 242 (ERRKVFNESA…EETAAPAAAP (191 aa)) are Mitochondrial intermembrane-facing. Residues 58–111 (NESAQKATSPRDSIIAQDSLKENVHKKSVRQDEFSGESTKPEASTSSDSVEKAA) are disordered. The span at 59-68 (ESAQKATSPR) shows a compositional bias: polar residues. The segment covering 76-90 (SLKENVHKKSVRQDE) has biased composition (basic and acidic residues). Residues 93-105 (GESTKPEASTSSD) show a composition bias toward polar residues. Cystine bridges form between Cys144/Cys146, Cys155/Cys188, and Cys165/Cys178. The region spanning 152-196 (TGPCGEQFKAAFSCFVYSEAEPKGVDCVELFKVMQDCFREHPEIY) is the CHCH domain. 2 consecutive short sequence motifs (cx9C motif) follow at residues 155-165 (CGEQFKAAFSC) and 178-188 (CVELFKVMQDC). Residues 215–242 (DEAPPQEGTMEEKVEAAKEETAAPAAAP) form a disordered region. Residues 224–235 (MEEKVEAAKEET) are compositionally biased toward basic and acidic residues.

Monomer. Cu(2+) is required as a cofactor. Requires Zn(2+) as cofactor.

The protein resides in the mitochondrion inner membrane. Functionally, required for the import and folding of small cysteine-containing proteins (small Tim) in the mitochondrial intermembrane space (IMS). Forms a redox cycle with ERV1 that involves a disulfide relay system. Precursor proteins to be imported into the IMS are translocated in their reduced form into the mitochondria. The oxidized form of MIA40 forms a transient intermolecular disulfide bridge with the reduced precursor protein, resulting in oxidation of the precursor protein that now contains an intramolecular disulfide bond and is able to undergo folding in the IMS. This Cryptococcus neoformans var. neoformans serotype D (strain B-3501A) (Filobasidiella neoformans) protein is Mitochondrial intermembrane space import and assembly protein 40 (MIA40).